The sequence spans 201 residues: Holliday junction branch migration complex subunit RuvA (201 aa).

Residues methionine 1 to proline 64 are domain I. Positions asparagine 65–serine 140 are domain II. A flexible linker region spans residues serine 140 to alanine 144. The tract at residues serine 145–serine 201 is domain III.

It belongs to the RuvA family. In terms of assembly, homotetramer. Forms an RuvA(8)-RuvB(12)-Holliday junction (HJ) complex. HJ DNA is sandwiched between 2 RuvA tetramers; dsDNA enters through RuvA and exits via RuvB. An RuvB hexamer assembles on each DNA strand where it exits the tetramer. Each RuvB hexamer is contacted by two RuvA subunits (via domain III) on 2 adjacent RuvB subunits; this complex drives branch migration. In the full resolvosome a probable DNA-RuvA(4)-RuvB(12)-RuvC(2) complex forms which resolves the HJ.

The protein resides in the cytoplasm. Its function is as follows. The RuvA-RuvB-RuvC complex processes Holliday junction (HJ) DNA during genetic recombination and DNA repair, while the RuvA-RuvB complex plays an important role in the rescue of blocked DNA replication forks via replication fork reversal (RFR). RuvA specifically binds to HJ cruciform DNA, conferring on it an open structure. The RuvB hexamer acts as an ATP-dependent pump, pulling dsDNA into and through the RuvAB complex. HJ branch migration allows RuvC to scan DNA until it finds its consensus sequence, where it cleaves and resolves the cruciform DNA. The sequence is that of Holliday junction branch migration complex subunit RuvA from Treponema denticola (strain ATCC 35405 / DSM 14222 / CIP 103919 / JCM 8153 / KCTC 15104).